Consider the following 1065-residue polypeptide: Presequence protease, mitochondrial (1065 aa).

The transit peptide at Met1–Ala42 directs the protein to the mitochondrion. His117 is a Zn(2+) binding site. Glu120 (proton acceptor) is an active-site residue. His121 is a binding site for Zn(2+). Residue Glu193 is part of the active site. Residue Glu230 participates in Zn(2+) binding.

It belongs to the peptidase M16 family. PreP subfamily. As to quaternary structure, monomer and homodimer; homodimerization is induced by binding of the substrate. Requires Zn(2+) as cofactor.

It localises to the mitochondrion intermembrane space. The protein localises to the mitochondrion matrix. Functionally, degrades mitochondrial transit peptides after their cleavage in the intermembrane space or in the matrix, and presequence peptides; clearance of these peptides is required to keep the presequence processing machinery running. Preferentially cleaves the N-terminal side of paired basic amino acid residues. Also degrades other unstructured peptides. May function as an ATP-dependent peptidase as opposed to a metalloendopeptidase. This is Presequence protease, mitochondrial (cym1) from Aspergillus fumigatus (strain ATCC MYA-4609 / CBS 101355 / FGSC A1100 / Af293) (Neosartorya fumigata).